The following is a 428-amino-acid chain: AP-1 complex subunit mu (428 aa).

At A2 the chain carries N-acetylalanine; partial. An MHD domain is found at 169–426; it reads KNEVFLDVVE…VCLSGDYQFR (258 aa).

Belongs to the adaptor complexes medium subunit family. As to quaternary structure, adaptor protein complex 1 (AP-1) is a heterotetramer composed of two large adaptins (gamma-type subunit and beta-type subunit), a medium adaptin (mu-type subunit) and a small adaptin (sigma-type subunit).

It localises to the golgi apparatus. The protein localises to the trans-Golgi network. It is found in the cytoplasmic vesicle. Its subcellular location is the clathrin-coated vesicle membrane. Subunit of clathrin-associated adaptor protein complex 1 that plays a role in protein sorting in the trans-Golgi network (TGN) and endosomes. The AP complexes mediate the recruitment of clathrin to membranes and the recognition of sorting signals within the cytosolic tails of transmembrane cargo molecules. Also involved in early steps of phagocytosis and macropinocytosis. This chain is AP-1 complex subunit mu (apm1), found in Dictyostelium discoideum (Social amoeba).